A 137-amino-acid polypeptide reads, in one-letter code: Holo-[acyl-carrier-protein] synthase (137 aa).

Mg(2+) is bound by residues aspartate 8 and glutamate 57.

It belongs to the P-Pant transferase superfamily. AcpS family. Mg(2+) is required as a cofactor.

The protein localises to the cytoplasm. It catalyses the reaction apo-[ACP] + CoA = holo-[ACP] + adenosine 3',5'-bisphosphate + H(+). Transfers the 4'-phosphopantetheine moiety from coenzyme A to a Ser of acyl-carrier-protein. The polypeptide is Holo-[acyl-carrier-protein] synthase (Hyphomonas neptunium (strain ATCC 15444)).